The sequence spans 668 residues: Small ribosomal subunit protein mS81 (rPPR8) (668 aa).

The N-terminal 36 residues, 1-36 (MRYQQWRLMLLRSYHRSHLPYLSPCSQVTSISSRSF), are a transit peptide targeting the mitochondrion. PPR repeat units follow at residues 286–320 (DEKT…GYEV), 321–355 (EIET…SSSS), 396–430 (TDSL…GYVP), 431–465 (SGDM…GNNL), 466–496 (DDKA…MVGN), 502–537 (ADYS…QLKP), and 543–577 (KSLV…GFPP).

This sequence belongs to the PPR family. P subfamily. In terms of assembly, component of the mitochondrial ribosome small subunit.

It localises to the mitochondrion. This chain is Small ribosomal subunit protein mS81 (rPPR8), found in Arabidopsis thaliana (Mouse-ear cress).